Here is a 587-residue protein sequence, read N- to C-terminus: Vesicular glutamate transporter 2.2 (587 aa).

Topologically, residues 1-71 (MDTVKERVLA…CTCFGLPRRY (71 aa)) are cytoplasmic. The helical transmembrane segment at 72 to 92 (IIAIMSGLGFCISFGIRCNLG) threads the bilayer. The Vesicular portion of the chain corresponds to 93 to 125 (VAIVDMVNNSTIHKGGKIIIKGKAKFNWDPETV). Asn100 and Asn101 each carry an N-linked (GlcNAc...) asparagine glycan. The chain crosses the membrane as a helical span at residues 126 to 146 (GMIHGSFFWGYTVTQIPGGYI). Topologically, residues 147–149 (SSR) are cytoplasmic. Residues 150–170 (LAANRVFGAAILLTSTLNMFI) form a helical membrane-spanning segment. At 171–180 (PSAARVHYGC) the chain is on the vesicular side. Residues 181–203 (VMFVRILQGLVEGVTYPACHGIW) form a helical membrane-spanning segment. Residues 204 to 217 (SKWAPPLERSRLAT) are Cytoplasmic-facing. The chain crosses the membrane as a helical span at residues 218–238 (TSFCGSYAGAVVAMPLAGILV). The Vesicular portion of the chain corresponds to 239 to 245 (QYSGWSS). A helical transmembrane segment spans residues 246–266 (VFYIYGSFGIVWYMFWILVSY). Topologically, residues 267–311 (ESPADHPTITDEERTYIEESIGESAKLLGAMEKYKTPWRKFFTSM) are cytoplasmic. A helical transmembrane segment spans residues 312-332 (PVYAIIVANFCRSWTFYLLLI). Over 333–350 (SQPAYFEEVFGFEISKVG) the chain is Vesicular. A helical transmembrane segment spans residues 351 to 371 (MVSALPHLVMTIIVPIGGQLA). Over 372–387 (DYLRSKNILTTTTVRK) the chain is Cytoplasmic. The chain crosses the membrane as a helical span at residues 388–408 (IMNCGGFGMEATLLLVVGFSH). The Vesicular portion of the chain corresponds to 409–410 (SK). A helical transmembrane segment spans residues 411 to 431 (GVAISFLVLAVGFSGFAISGF). Residues 432–444 (NVNHLDIAPRYAS) are Cytoplasmic-facing. A helical transmembrane segment spans residues 445-465 (ILMGISNGVGTLSGMVCPLIV). At 466 to 479 (GAMTKNKTREEWQN) the chain is on the vesicular side. The N-linked (GlcNAc...) asparagine glycan is linked to Asn471. Residues 480–500 (VFLIASLVHYGGVIFYGIFAS) form a helical membrane-spanning segment. Topologically, residues 501 to 587 (GEKQPWADPE…ERTYTGDGYS (87 aa)) are cytoplasmic.

Belongs to the major facilitator superfamily. Sodium/anion cotransporter family. VGLUT subfamily. As to expression, expressed in spinal cord.

The protein localises to the cytoplasmic vesicle. The protein resides in the secretory vesicle. Its subcellular location is the synaptic vesicle membrane. It localises to the membrane. It is found in the synapse. The protein localises to the synaptosome. The protein resides in the cell membrane. It carries out the reaction L-glutamate(out) = L-glutamate(in). The catalysed reaction is 3 Na(+)(out) + phosphate(out) = 3 Na(+)(in) + phosphate(in). It catalyses the reaction phosphate(in) = phosphate(out). The enzyme catalyses K(+)(in) + H(+)(out) = K(+)(out) + H(+)(in). It carries out the reaction chloride(in) = chloride(out). Its activity is regulated as follows. Chloride channel activity is allosterically activated by lumenal H(+) and Cl(-) leading to synaptic vesicles acidification. The L-glutamate transport activity is allosterically activated by lumenal H(+) and Cl(-). The allosteric requirement for H(+) efficiently prevents non-vesicular efflux across the plasma membrane. The L-glutamate uniporter activity exhibits a biphasic dependence on chloride concentration. Multifunctional transporter that transports L-glutamate as well as multiple ions such as chloride, proton, potassium, sodium and phosphate. At the synaptic vesicle membrane, mainly functions as a uniporter which transports preferentially L-glutamate but also, phosphate from the cytoplasm into synaptic vesicles at presynaptic nerve terminals of excitatory neural cells. The L-glutamate or phosphate uniporter activity is electrogenic and is driven by the proton electrochemical gradient, mainly by the electrical gradient established by the vacuolar H(+)-ATPase across the synaptic vesicle membrane. In addition, functions as a chloride channel that allows a chloride permeation through the synaptic vesicle membrane therefore affects the proton electrochemical gradient and promotes synaptic vesicles acidification. Moreover, functions as a vesicular K(+)/H(+) antiport allowing to maintain the electrical gradient and to decrease chemical gradient and therefore sustain vesicular L-glutamate uptake. The vesicular H(+)/H(+) antiport activity is electroneutral. At the plasma membrane, following exocytosis, functions as a symporter of Na(+) and phosphate from the extracellular space to the cytoplasm allowing synaptic phosphate homeostasis regulation. The symporter activity is driven by an inside negative membrane potential and is electrogenic. Also involved in the regulation of retinal hyaloid vessel regression during postnatal development. May also play a role in the endocrine L-glutamatergic system of other tissues such as pineal gland and pancreas. This is Vesicular glutamate transporter 2.2 (slc17a6a) from Danio rerio (Zebrafish).